The sequence spans 157 residues: MARSKKGKNLIYVLLGLVGLLAFFVLFVPTLTISASTPVWLENTITYATSFRDAFNVSGMVYMVILLGVLIAYLLLKYSKTRQNKDALKVVLAVVIAFAVYLLFTPALAAAFSDQVWLVDFSKLATDITSFIDTNNGFLTIIAGLGALTFFIVKKSK.

Its function is as follows. May be a DNA-binding protein involved in virion nucleoprotein condensation. This is an uncharacterized protein from Mycoplasma (Bacteriophage L2).